Reading from the N-terminus, the 490-residue chain is Protein twist (490 aa).

Disordered regions lie at residues 48-74 (QLQH…QHTQ), 98-167 (PSNE…TGGS), and 330-359 (LDGS…ETDE). Over residues 54-64 (QHLHSHQHHQQ) the composition is skewed to basic residues. Composition is skewed to low complexity over residues 65–74 (HQQQQQQHTQ) and 104–135 (STSS…NNPS). The segment covering 339–351 (AFRKPRRRLKRKP) has biased composition (basic residues). In terms of domain architecture, bHLH spans 362–413 (NQRVMANVRERQRTQSLNDAFKSLQQIIPTLPSDKLSKIQTLKLATRYIDFL).

In terms of assembly, efficient DNA binding requires dimerization with another bHLH protein. Homodimer.

The protein localises to the nucleus. Its function is as follows. Involved in the establishment and dorsoventral patterning of germ layers in the embryo. This Drosophila erecta (Fruit fly) protein is Protein twist.